The primary structure comprises 427 residues: MTEAMKITLSTQPADARWGEKATYSINNDGITLHLNGADDLGLIQRAARKIDGLGIKHVQLSGEDWDADRCWAFWQGYKAPKGTRKVEWPDLDDAQRQELDNRLMIIDWVRDTINAPAEELGPSQLAQRAVDLISNVAGDRVTYRITKGEDLRDQGYMGLHTVGRGSERSPVLLALDYNPTGDKEAPVYACLVGKGITFDSGGYSIKQTAFMDSMKSDMGGAATVTGALAFAITRGLNKRVKLFLCCADNLISGNAFKLGDIITYRNGKKVEVMNTDAEGRLVLADGLIDASAQKPELIIDAATLTGAAKTALGNDYHALFSFDDALAARLLASASQENEPFWRLPLAEFHRSQLPSNFAELNNTGSAAYPAGASTAAGFLSHFVENYQQGWLHIDCSATYRKAPVEQWSAGATGLGVRTIANLLTA.

Mn(2+)-binding residues include Lys195 and Asp200. Lys207 is a catalytic residue. 3 residues coordinate Mn(2+): Asp218, Asp277, and Glu279. Arg281 is a catalytic residue.

Belongs to the peptidase M17 family. As to quaternary structure, homohexamer. Requires Mn(2+) as cofactor.

Its subcellular location is the cytoplasm. It catalyses the reaction Release of an N-terminal amino acid, Xaa, from a peptide or arylamide. Xaa is preferably Glu or Asp but may be other amino acids, including Leu, Met, His, Cys and Gln.. Functionally, probably plays an important role in intracellular peptide degradation. In Escherichia coli O7:K1 (strain IAI39 / ExPEC), this protein is Peptidase B.